The primary structure comprises 411 residues: Multifunctional CCA protein (411 aa).

ATP is bound by residues Gly-8 and Arg-11. The CTP site is built by Gly-8 and Arg-11. Residues Asp-21 and Asp-23 each contribute to the Mg(2+) site. The ATP site is built by Arg-91, Arg-137, and Arg-140. CTP-binding residues include Arg-91, Arg-137, and Arg-140. The HD domain occupies 228–333 (SGVHTLLVIE…LKVFNALDIW (106 aa)).

Belongs to the tRNA nucleotidyltransferase/poly(A) polymerase family. Bacterial CCA-adding enzyme type 1 subfamily. As to quaternary structure, monomer. Can also form homodimers and oligomers. The cofactor is Mg(2+). Ni(2+) is required as a cofactor.

It catalyses the reaction a tRNA precursor + 2 CTP + ATP = a tRNA with a 3' CCA end + 3 diphosphate. It carries out the reaction a tRNA with a 3' CCA end + 2 CTP + ATP = a tRNA with a 3' CCACCA end + 3 diphosphate. Its function is as follows. Catalyzes the addition and repair of the essential 3'-terminal CCA sequence in tRNAs without using a nucleic acid template. Adds these three nucleotides in the order of C, C, and A to the tRNA nucleotide-73, using CTP and ATP as substrates and producing inorganic pyrophosphate. tRNA 3'-terminal CCA addition is required both for tRNA processing and repair. Also involved in tRNA surveillance by mediating tandem CCA addition to generate a CCACCA at the 3' terminus of unstable tRNAs. While stable tRNAs receive only 3'-terminal CCA, unstable tRNAs are marked with CCACCA and rapidly degraded. The polypeptide is Multifunctional CCA protein (Actinobacillus pleuropneumoniae serotype 5b (strain L20)).